Reading from the N-terminus, the 334-residue chain is Protein-methionine-sulfoxide reductase catalytic subunit MsrP (334 aa).

Residues 1 to 44 constitute a signal peptide (tat-type signal); that stretch reads MKKNQFLKESDVTAESVFFMKRRQVLKALGISAAALSLPHAAHA. Mo-molybdopterin-binding positions include Asn-88, 91–92, Cys-146, Thr-181, Asn-233, Arg-238, and 249–251; these read YE and GIK.

It belongs to the MsrP family. As to quaternary structure, heterodimer of a catalytic subunit (MsrP) and a heme-binding subunit (MsrQ). It depends on Mo-molybdopterin as a cofactor. Post-translationally, predicted to be exported by the Tat system. The position of the signal peptide cleavage has not been experimentally proven.

It is found in the periplasm. It catalyses the reaction L-methionyl-[protein] + a quinone + H2O = L-methionyl-(S)-S-oxide-[protein] + a quinol. It carries out the reaction L-methionyl-[protein] + a quinone + H2O = L-methionyl-(R)-S-oxide-[protein] + a quinol. Functionally, part of the MsrPQ system that repairs oxidized periplasmic proteins containing methionine sulfoxide residues (Met-O), using respiratory chain electrons. Thus protects these proteins from oxidative-stress damage caused by reactive species of oxygen and chlorine generated by the host defense mechanisms. MsrPQ is essential for the maintenance of envelope integrity under bleach stress, rescuing a wide series of structurally unrelated periplasmic proteins from methionine oxidation, including the primary periplasmic chaperone SurA and the lipoprotein Pal. The catalytic subunit MsrP is non-stereospecific, being able to reduce both (R-) and (S-) diastereoisomers of methionine sulfoxide. The sequence is that of Protein-methionine-sulfoxide reductase catalytic subunit MsrP from Escherichia coli O81 (strain ED1a).